The chain runs to 1137 residues: 2'-5'-oligoadenylate synthase 3 (1137 aa).

Position 1 is an N-acetylmethionine (Met1). An OAS domain 1 region spans residues 6 to 341 (TPAGALDKLV…GALVQPWEGP (336 aa)). 2 interaction with dsRNA regions span residues 12-56 (DKLV…VIRI) and 185-199 (ELRK…VKLK). A linker region spans residues 342–461 (GLPCAGILDL…GSQMGPDLSQ (120 aa)). Polar residues predominate over residues 434-453 (QSTASSNTPPGHSSMSTAGS). A disordered region spans residues 434 to 462 (QSTASSNTPPGHSSMSTAGSQMGPDLSQI). OAS domain regions lie at residues 462–792 (IPSK…PWDV) and 800–1134 (TPAQ…WPVK). Ser854 contributes to the ATP binding site. Positions 866, 868, and 938 each coordinate Mg(2+). ATP contacts are provided by Arg997, Lys1000, and Gln1019.

The protein belongs to the 2-5A synthase family. As to quaternary structure, monomer. Mg(2+) is required as a cofactor.

It is found in the cytoplasm. It localises to the nucleus. The enzyme catalyses 3 ATP = 5'-triphosphoadenylyl-(2'-&gt;5')-adenylyl-(2'-&gt;5')-adenosine + 2 diphosphate. Produced as a latent enzyme which is activated by dsRNA generated during the course of viral infection. Strongly activated by long dsRNAs at least 50 nucleotides in length. ssRNA does not activate the enzyme. In terms of biological role, interferon-induced, dsRNA-activated antiviral enzyme which plays a critical role in cellular innate antiviral response. In addition, it may also play a role in other cellular processes such as apoptosis, cell growth, differentiation and gene regulation. Synthesizes preferentially dimers of 2'-5'-oligoadenylates (2-5A) from ATP which then bind to the inactive monomeric form of ribonuclease L (RNase L) leading to its dimerization and subsequent activation. Activation of RNase L leads to degradation of cellular as well as viral RNA, resulting in the inhibition of protein synthesis, thus terminating viral replication. Can mediate the antiviral effect via the classical RNase L-dependent pathway or an alternative antiviral pathway independent of RNase L. This is 2'-5'-oligoadenylate synthase 3 (Oas3) from Rattus norvegicus (Rat).